A 452-amino-acid chain; its full sequence is Phosphoglucosamine mutase (452 aa).

S108 serves as the catalytic Phosphoserine intermediate. Mg(2+) contacts are provided by S108, D247, D249, and D251. S108 is subject to Phosphoserine.

This sequence belongs to the phosphohexose mutase family. It depends on Mg(2+) as a cofactor. Post-translationally, activated by phosphorylation.

It carries out the reaction alpha-D-glucosamine 1-phosphate = D-glucosamine 6-phosphate. Its function is as follows. Catalyzes the conversion of glucosamine-6-phosphate to glucosamine-1-phosphate. This Burkholderia pseudomallei (strain 668) protein is Phosphoglucosamine mutase.